Here is a 352-residue protein sequence, read N- to C-terminus: Heavy metal-associated isoprenylated plant protein 36 (352 aa).

One can recognise an HMA domain in the interval 29 to 92 (YTTWVLRVSI…KIMKAGRHAE (64 aa)). Cys-40 and Cys-43 together coordinate a metal cation. Disordered regions lie at residues 96–150 (TSME…GNFD), 162–211 (QLQP…GPPE), and 229–252 (PHLH…RHHP). The segment covering 97 to 107 (SMENNINNDCN) has biased composition (polar residues). Acidic residues predominate over residues 118–128 (ETSGDEDDDEN). Over residues 133-148 (NGGGDVGGGGGGGGGN) the composition is skewed to gly residues. Over residues 172 to 183 (KKKKKKKKKKKS) the composition is skewed to basic residues. A compositionally biased stretch (gly residues) spans 192 to 203 (EGGGGGGGGGGP). Residue Cys-349 is modified to Cysteine methyl ester. Cys-349 carries the S-farnesyl cysteine lipid modification. A propeptide spans 350-352 (CVM) (removed in mature form).

It belongs to the HIPP family.

Its function is as follows. Heavy-metal-binding protein. The protein is Heavy metal-associated isoprenylated plant protein 36 of Arabidopsis thaliana (Mouse-ear cress).